A 254-amino-acid chain; its full sequence is Translation initiation factor 2 subunit alpha (254 aa).

One can recognise an S1 motif domain in the interval 10–81 (GDLVVVKITE…ERKNVDLSLK (72 aa)).

This sequence belongs to the eIF-2-alpha family. Heterotrimer composed of an alpha, a beta and a gamma chain.

Its function is as follows. eIF-2 functions in the early steps of protein synthesis by forming a ternary complex with GTP and initiator tRNA. The chain is Translation initiation factor 2 subunit alpha from Thermoplasma volcanium (strain ATCC 51530 / DSM 4299 / JCM 9571 / NBRC 15438 / GSS1).